The primary structure comprises 204 residues: Thymidylate kinase (204 aa).

12-19 lines the ATP pocket; sequence GVDGAGKS.

This sequence belongs to the thymidylate kinase family.

The catalysed reaction is dTMP + ATP = dTDP + ADP. In terms of biological role, phosphorylation of dTMP to form dTDP in both de novo and salvage pathways of dTTP synthesis. This chain is Thymidylate kinase, found in Thiobacillus denitrificans (strain ATCC 25259 / T1).